Consider the following 228-residue polypeptide: HTH-type transcriptional regulator ArcR (228 aa).

A nucleoside 3',5'-cyclic phosphate is bound at residue 22–141; the sequence is SYINIPVGVL…VKLFSLLSET (120 aa). The HTH crp-type domain occupies 155 to 228; it reads KLAKERVTKI…SKNWLVSKDL (74 aa). The segment at residues 188 to 207 is a DNA-binding region (H-T-H motif); sequence IQLLSDMAGISRETTSHIIN.

It is found in the cytoplasm. Functionally, positively regulates the expression of the arcABDCR operon under anaerobic conditions, thus playing an essential role in arginine catabolism. May also control the expression of genes encoding proteins which are involved in anaerobic metabolism. Can bind cyclic AMP. The polypeptide is HTH-type transcriptional regulator ArcR (arcR) (Staphylococcus epidermidis (strain ATCC 12228 / FDA PCI 1200)).